Here is a 532-residue protein sequence, read N- to C-terminus: 2,3-bisphosphoglycerate-independent phosphoglycerate mutase (532 aa).

Positions 13 and 63 each coordinate Mn(2+). Catalysis depends on serine 63, which acts as the Phosphoserine intermediate. Substrate-binding positions include histidine 124, 154-155, arginine 187, arginine 193, 262-265, and lysine 343; these read RD and RPDR. Positions 421, 425, 463, 464, and 481 each coordinate Mn(2+).

It belongs to the BPG-independent phosphoglycerate mutase family. In terms of assembly, monomer. The cofactor is Mn(2+).

The enzyme catalyses (2R)-2-phosphoglycerate = (2R)-3-phosphoglycerate. It participates in carbohydrate degradation; glycolysis; pyruvate from D-glyceraldehyde 3-phosphate: step 3/5. Catalyzes the interconversion of 2-phosphoglycerate and 3-phosphoglycerate. The polypeptide is 2,3-bisphosphoglycerate-independent phosphoglycerate mutase (Mesoplasma florum (strain ATCC 33453 / NBRC 100688 / NCTC 11704 / L1) (Acholeplasma florum)).